A 303-amino-acid polypeptide reads, in one-letter code: Glycine--tRNA ligase alpha subunit (303 aa).

It belongs to the class-II aminoacyl-tRNA synthetase family. Tetramer of two alpha and two beta subunits.

Its subcellular location is the cytoplasm. It catalyses the reaction tRNA(Gly) + glycine + ATP = glycyl-tRNA(Gly) + AMP + diphosphate. The chain is Glycine--tRNA ligase alpha subunit (glyQ) from Helicobacter pylori (strain ATCC 700392 / 26695) (Campylobacter pylori).